We begin with the raw amino-acid sequence, 210 residues long: Isochorismatase domain-containing protein 2 (210 aa).

S7 is modified (phosphoserine).

This sequence belongs to the isochorismatase family. Interacts with CDKN2A.

It localises to the cytoplasm. The protein resides in the nucleus. The chain is Isochorismatase domain-containing protein 2 (Isoc2) from Rattus norvegicus (Rat).